The sequence spans 126 residues: MAFNGTWQVYSQENYEDFLKAIALPDDIIKAAKDVKPVTEIRQTGNTFVVTSKTPNKSVTNSFTLGKEADMTTMDGKKVKCTVNLVDGKLVAKSDKFIHEQEIVGNEMVETITSGSATFTRRSKKI.

Cholate is bound by residues 54–56 (TPN), 99–101 (HEQ), and arginine 121.

This sequence belongs to the calycin superfamily. Fatty-acid binding protein (FABP) family.

Its subcellular location is the cytoplasm. Functionally, FABPs are thought to play a role in the intracellular transport of long-chain fatty acids and their acyl-CoA esters. The chain is Fatty acid-binding protein, liver from Anolis pulchellus (Common grass anole).